The following is a 287-amino-acid chain: Elongation factor Ts (287 aa).

The involved in Mg(2+) ion dislocation from EF-Tu stretch occupies residues 80–83 (TDFL).

Belongs to the EF-Ts family.

The protein resides in the cytoplasm. Associates with the EF-Tu.GDP complex and induces the exchange of GDP to GTP. It remains bound to the aminoacyl-tRNA.EF-Tu.GTP complex up to the GTP hydrolysis stage on the ribosome. The protein is Elongation factor Ts of Pseudomonas fluorescens (strain Pf0-1).